We begin with the raw amino-acid sequence, 415 residues long: Gamma-glutamyl phosphate reductase (415 aa).

The protein belongs to the gamma-glutamyl phosphate reductase family.

The protein resides in the cytoplasm. The catalysed reaction is L-glutamate 5-semialdehyde + phosphate + NADP(+) = L-glutamyl 5-phosphate + NADPH + H(+). Its pathway is amino-acid biosynthesis; L-proline biosynthesis; L-glutamate 5-semialdehyde from L-glutamate: step 2/2. Its function is as follows. Catalyzes the NADPH-dependent reduction of L-glutamate 5-phosphate into L-glutamate 5-semialdehyde and phosphate. The product spontaneously undergoes cyclization to form 1-pyrroline-5-carboxylate. This is Gamma-glutamyl phosphate reductase from Bacillus cereus (strain 03BB102).